Reading from the N-terminus, the 1107-residue chain is Unconventional myosin-Ie (1107 aa).

One can recognise a Myosin motor domain in the interval 19-692 (SGVDDMVLLS…SLFLLEEMRE (674 aa)). 112–119 (GESGAGKT) is an ATP binding site. Positions 581–591 (PHYIRCIKPNE) are actin-binding. In terms of domain architecture, IQ spans 695–724 (YDGYARVIQKTWRKFVARKKYVQMREEASD). Positions 730-922 (KERRRNSINR…NKVLQVSIGP (193 aa)) constitute a TH1 domain. The tract at residues 919–1052 (SIGPGLPKNS…KPQPKPKPQV (134 aa)) is disordered. 2 stretches are compositionally biased toward polar residues: residues 979 to 989 (NQRSNQKSLYT) and 998 to 1012 (RQQS…QTPE). At Ser1001 the chain carries Phosphoserine. Over residues 1034-1051 (RPPPAGGRPKPQPKPKPQ) the composition is skewed to pro residues. Residues 1050-1107 (PQVPQCKALYAYDAQDTDELSFNANDIIDIIKEDPSGWWTGRLRGKQGLFPNNYVTKI) form the SH3 domain.

The protein belongs to the TRAFAC class myosin-kinesin ATPase superfamily. Myosin family. In terms of assembly, interacts with CALM and F-actin. Interacts (via SH3 domain) with SYNJ1, DNM1 and DNM2. Interacts with ARL14EP. Interacts with CARMIL1. In terms of tissue distribution, detected in kidney glomeruli (at protein level). Detected in utricle.

It localises to the cytoplasm. Its subcellular location is the cell junction. It is found in the cytoplasmic vesicle. The protein localises to the clathrin-coated vesicle. The protein resides in the cytoskeleton. Its function is as follows. Myosins are actin-based motor molecules with ATPase activity. Unconventional myosins serve in intracellular movements. Their highly divergent tails bind to membranous compartments, which are then moved relative to actin filaments. Binds to membranes containing anionic phospholipids via its tail domain. Involved in clathrin-mediated endocytosis and intracellular movement of clathrin-coated vesicles. Required for normal morphology of the glomerular basement membrane, normal development of foot processes by kidney podocytes and normal kidney function. In dendritic cells, may control the movement of class II-containing cytoplasmic vesicles along the actin cytoskeleton by connecting them with the actin network via ARL14EP and ARL14. This Mus musculus (Mouse) protein is Unconventional myosin-Ie (Myo1e).